We begin with the raw amino-acid sequence, 670 residues long: DNA ligase (670 aa).

NAD(+)-binding positions include 32–36 (DSEYD), 81–82 (SL), and E114. K116 functions as the N6-AMP-lysine intermediate in the catalytic mechanism. NAD(+) contacts are provided by R137, E174, K291, and K315. Positions 409, 412, 427, and 433 each coordinate Zn(2+). In terms of domain architecture, BRCT spans 592 to 670 (ASENLFKDKT…EEEFLAQITR (79 aa)).

This sequence belongs to the NAD-dependent DNA ligase family. LigA subfamily. Requires Mg(2+) as cofactor. The cofactor is Mn(2+).

The catalysed reaction is NAD(+) + (deoxyribonucleotide)n-3'-hydroxyl + 5'-phospho-(deoxyribonucleotide)m = (deoxyribonucleotide)n+m + AMP + beta-nicotinamide D-nucleotide.. In terms of biological role, DNA ligase that catalyzes the formation of phosphodiester linkages between 5'-phosphoryl and 3'-hydroxyl groups in double-stranded DNA using NAD as a coenzyme and as the energy source for the reaction. It is essential for DNA replication and repair of damaged DNA. This chain is DNA ligase, found in Haemophilus influenzae (strain ATCC 51907 / DSM 11121 / KW20 / Rd).